We begin with the raw amino-acid sequence, 427 residues long: Enolase (427 aa).

Position 163 (Q163) interacts with (2R)-2-phosphoglycerate. E205 acts as the Proton donor in catalysis. 3 residues coordinate Mg(2+): D242, E285, and D312. K337, R366, S367, and K388 together coordinate (2R)-2-phosphoglycerate. K337 acts as the Proton acceptor in catalysis.

The protein belongs to the enolase family. The cofactor is Mg(2+).

Its subcellular location is the cytoplasm. The protein localises to the secreted. It localises to the cell surface. The enzyme catalyses (2R)-2-phosphoglycerate = phosphoenolpyruvate + H2O. The protein operates within carbohydrate degradation; glycolysis; pyruvate from D-glyceraldehyde 3-phosphate: step 4/5. Catalyzes the reversible conversion of 2-phosphoglycerate (2-PG) into phosphoenolpyruvate (PEP). It is essential for the degradation of carbohydrates via glycolysis. In Polaromonas sp. (strain JS666 / ATCC BAA-500), this protein is Enolase.